A 1150-amino-acid polypeptide reads, in one-letter code: Rho-type GTPase-activating protein 1 (1150 aa).

A compositionally biased stretch (basic and acidic residues) spans 1–10 (MSQRDAKKDG). The segment at 1-78 (MSQRDAKKDG…AESRKALPNQ (78 aa)) is disordered. Polar residues predominate over residues 40–62 (TTKNFPHSRHTSTVAGTEGGSSL). LIM zinc-binding domains lie at 114–177 (KICA…RRLD), 178–238 (LLCA…LFAA), and 483–546 (DLCY…SSNV). The disordered stretch occupies residues 586 to 683 (SQRKPLSVDP…SHGGSITGKS (98 aa)). Over residues 598-617 (ENVSSTVETAKQAETTASSD) the composition is skewed to polar residues. The span at 642–655 (SNETQSSSNSTETS) shows a compositional bias: low complexity. Position 690 is a phosphoserine (serine 690). The segment at 726 to 759 (AFRHMPSYTDPSYRKNSGAIYDKNDGTQKGLTPK) is disordered. Residues 837–1038 (VPLEILVERN…LLIENFEKFC (202 aa)) enclose the Rho-GAP domain. 2 disordered regions span residues 1078–1097 (LDER…RQPI) and 1104–1150 (LTSD…IRDS). Residues 1088-1097 (ASTKRKRQPI) show a composition bias toward basic residues. The segment covering 1104-1134 (LTSDVPSGSEVADTNSLSSTTKDEASPNSDA) has biased composition (polar residues).

The protein resides in the cell tip. Its subcellular location is the nucleus. In terms of biological role, GTPase-activating protein for Rho1. Involved in the F-actin patch localization, cell morphogenesis, regulation of septation, and cell wall synthesis. The sequence is that of Rho-type GTPase-activating protein 1 (rga1) from Schizosaccharomyces pombe (strain 972 / ATCC 24843) (Fission yeast).